The following is a 227-amino-acid chain: Putative ankyrin repeat protein RF_0314 (227 aa).

ANK repeat units lie at residues 94 to 126 (NGCTFLHYSVEDVKVLYDNIPQFLLEKGADPNI), 130 to 164 (DGNTPLHILINRDFFSSKEIYVAKLLIQYGADIEL), and 168 to 199 (LGWTPIQCFIQAGNIKLKALLQLVKACKDNDF).

This Rickettsia felis (strain ATCC VR-1525 / URRWXCal2) (Rickettsia azadi) protein is Putative ankyrin repeat protein RF_0314.